The following is a 163-amino-acid chain: Ribonuclease H (163 aa).

The region spanning 16–157 (TTSPVEIYCD…CDSLARQAIT (142 aa)) is the RNase H type-1 domain. Asp25, Glu63, Asp85, and Asp149 together coordinate Mg(2+).

The protein belongs to the RNase H family. As to quaternary structure, monomer. Mg(2+) is required as a cofactor.

It localises to the cytoplasm. It catalyses the reaction Endonucleolytic cleavage to 5'-phosphomonoester.. In terms of biological role, endonuclease that specifically degrades the RNA of RNA-DNA hybrids. This Pelobacter propionicus (strain DSM 2379 / NBRC 103807 / OttBd1) protein is Ribonuclease H.